The sequence spans 248 residues: PF03932 family protein CutC (248 aa).

The protein belongs to the CutC family.

The protein localises to the cytoplasm. The chain is PF03932 family protein CutC from Photorhabdus laumondii subsp. laumondii (strain DSM 15139 / CIP 105565 / TT01) (Photorhabdus luminescens subsp. laumondii).